A 398-amino-acid chain; its full sequence is Interleukin-1 receptor type 2 (398 aa).

Positions 1-13 (MLRLYVLVMGVSA) are cleaved as a signal peptide. The Extracellular portion of the chain corresponds to 14–343 (FTLQPAAHTG…FQTLRTTVKE (330 aa)). Ig-like C2-type domains are found at residues 18 to 124 (PAAH…IELR), 134 to 223 (PFIS…ITRS), and 237 to 349 (PVII…STFS). Disulfide bonds link C28–C116, C50–C108, and C152–C207. N66, N72, and N112 each carry an N-linked (GlcNAc...) asparagine glycan. N219 and N277 each carry an N-linked (GlcNAc...) asparagine glycan. The cysteines at positions 258 and 326 are disulfide-linked. The segment at 329–343 (HNTLSFQTLRTTVKE) is contains proteolytic cleavage site. A helical transmembrane segment spans residues 344–369 (ASSTFSWGIVLAPLSLAFLVLGGIWM). The Cytoplasmic segment spans residues 370–398 (HRRCKHRTGKADGLTVLWPHHQDFQSYPK).

The protein belongs to the interleukin-1 receptor family. In terms of assembly, associates with IL1RAP to form a non-signaling interleukin-1 receptor complex. Post-translationally, a soluble form (sIL1R2) can also be produced by proteolytic cleavage at the cell surface (shedding) involving a metalloproteinase; hovever, several sIL1R2 forms ranging from 45 and 60 kDa are reported.

Its subcellular location is the secreted. It localises to the cell membrane. Functionally, non-signaling receptor for IL1A, IL1B and IL1RN. Reduces IL1B activities. Serves as a decoy receptor by competitive binding to IL1B and preventing its binding to IL1R1. Also modulates cellular response through non-signaling association with IL1RAP after binding to IL1B. IL1R2 (membrane and secreted forms) preferentially binds IL1B and poorly IL1A and IL1RN. The secreted IL1R2 recruits secreted IL1RAP with high affinity; this complex formation may be the dominant mechanism for neutralization of IL1B by secreted/soluble receptors. This is Interleukin-1 receptor type 2 (IL1R2) from Homo sapiens (Human).